The chain runs to 274 residues: Bis(5'-nucleosyl)-tetraphosphatase, symmetrical (274 aa).

It belongs to the Ap4A hydrolase family.

It catalyses the reaction P(1),P(4)-bis(5'-adenosyl) tetraphosphate + H2O = 2 ADP + 2 H(+). Hydrolyzes diadenosine 5',5'''-P1,P4-tetraphosphate to yield ADP. This Erwinia tasmaniensis (strain DSM 17950 / CFBP 7177 / CIP 109463 / NCPPB 4357 / Et1/99) protein is Bis(5'-nucleosyl)-tetraphosphatase, symmetrical.